The sequence spans 600 residues: Aspartate--tRNA(Asp/Asn) ligase (600 aa).

Glu-187 serves as a coordination point for L-aspartate. Residues 211–214 (QIFK) are aspartate. The L-aspartate site is built by Arg-233 and His-463. 233–235 (RDE) serves as a coordination point for ATP. Residue Glu-497 participates in ATP binding. Arg-504 contributes to the L-aspartate binding site. An ATP-binding site is contributed by 549–552 (GVDR).

Belongs to the class-II aminoacyl-tRNA synthetase family. Type 1 subfamily. In terms of assembly, homodimer.

The protein localises to the cytoplasm. The enzyme catalyses tRNA(Asx) + L-aspartate + ATP = L-aspartyl-tRNA(Asx) + AMP + diphosphate. Functionally, aspartyl-tRNA synthetase with relaxed tRNA specificity since it is able to aspartylate not only its cognate tRNA(Asp) but also tRNA(Asn). Reaction proceeds in two steps: L-aspartate is first activated by ATP to form Asp-AMP and then transferred to the acceptor end of tRNA(Asp/Asn). In Wolbachia pipientis subsp. Culex pipiens (strain wPip), this protein is Aspartate--tRNA(Asp/Asn) ligase.